A 118-amino-acid polypeptide reads, in one-letter code: HTH-type transcriptional regulator CmtR (118 aa).

Residues 3 to 97 (TCEMRESALA…ELVQVVLAVD (95 aa)) form the HTH arsR-type domain. Cysteine 57, cysteine 61, and cysteine 102 together coordinate Cd(2+).

Homodimer.

Its function is as follows. Metal-responsive transcriptional repressor for the cmt operon. Binding of cadmium or lead causes the repressor to dissociate from the DNA. This chain is HTH-type transcriptional regulator CmtR (cmtR), found in Mycobacterium bovis (strain ATCC BAA-935 / AF2122/97).